Reading from the N-terminus, the 275-residue chain is Large ribosomal subunit protein uL2 (275 aa).

2 disordered regions span residues 38-59 and 222-275; these read KKHA…GGHK and GSAM…RKQK. Basic residues-rich tracts occupy residues 39-59 and 254-275; these read KHAG…GGHK and MGKK…RKQK.

Belongs to the universal ribosomal protein uL2 family. As to quaternary structure, part of the 50S ribosomal subunit. Forms a bridge to the 30S subunit in the 70S ribosome.

One of the primary rRNA binding proteins. Required for association of the 30S and 50S subunits to form the 70S ribosome, for tRNA binding and peptide bond formation. It has been suggested to have peptidyltransferase activity; this is somewhat controversial. Makes several contacts with the 16S rRNA in the 70S ribosome. This Herpetosiphon aurantiacus (strain ATCC 23779 / DSM 785 / 114-95) protein is Large ribosomal subunit protein uL2.